Here is a 161-residue protein sequence, read N- to C-terminus: MGWHSNREFFVSWEELHRATRELARRQLPAEQYKGIIAVSRGGLVPAAIVSRELNIRVVDCVAVSSYDHTEQRDDLQVMKDVTATEDGEGFLVVDDLVDTGNTMKFLRERLPKAKFVTVYAKPSGMEMVDDFVADLAQDTWIHFPWDMHLHYIEPLAGQES.

Residues 41 to 42 (RG) and 95 to 103 (DDLVDTGNT) contribute to the 5-phospho-alpha-D-ribose 1-diphosphate site. D96 lines the Mg(2+) pocket. Guanine is bound by residues D99 and I142. Positions 99 and 142 each coordinate xanthine. Residues 99–103 (DTGNT) and 141–142 (WI) each bind GMP.

The protein belongs to the purine/pyrimidine phosphoribosyltransferase family. XGPT subfamily. As to quaternary structure, homotetramer. The cofactor is Mg(2+).

The protein localises to the cell inner membrane. The enzyme catalyses GMP + diphosphate = guanine + 5-phospho-alpha-D-ribose 1-diphosphate. The catalysed reaction is XMP + diphosphate = xanthine + 5-phospho-alpha-D-ribose 1-diphosphate. It carries out the reaction IMP + diphosphate = hypoxanthine + 5-phospho-alpha-D-ribose 1-diphosphate. The protein operates within purine metabolism; GMP biosynthesis via salvage pathway; GMP from guanine: step 1/1. It functions in the pathway purine metabolism; XMP biosynthesis via salvage pathway; XMP from xanthine: step 1/1. Its function is as follows. Purine salvage pathway enzyme that catalyzes the transfer of the ribosyl-5-phosphate group from 5-phospho-alpha-D-ribose 1-diphosphate (PRPP) to the N9 position of the 6-oxopurines guanine and xanthine to form the corresponding ribonucleotides GMP (guanosine 5'-monophosphate) and XMP (xanthosine 5'-monophosphate), with the release of PPi. To a lesser extent, also acts on hypoxanthine. The chain is Xanthine-guanine phosphoribosyltransferase from Idiomarina loihiensis (strain ATCC BAA-735 / DSM 15497 / L2-TR).